A 96-amino-acid polypeptide reads, in one-letter code: Neutrophil defensin 3 (96 aa).

Positions 1–19 (MRTLVILAAILLVALQAQA) are cleaved as a signal peptide. Positions 20–66 (EPLQARTDEATAAQEQIPTDNPEVVVSLAWDESLAPKDSVPGLRKNM) are excised as a propeptide. 3 disulfides stabilise this stretch: Cys68-Cys96, Cys70-Cys85, and Cys75-Cys95.

It is found in the secreted. Its function is as follows. Has bacteriostatic activity against Gram-positive bacteria S.aureus and L.monocytogenes and Gram-negative bacterium E.coli and antifungal activity against C.neoformans. The chain is Neutrophil defensin 3 from Macaca mulatta (Rhesus macaque).